The following is a 166-amino-acid chain: ATP synthase subunit b (166 aa).

A helical membrane pass occupies residues 27–47 (FFVVLLIFLIVLGVIAKWVVP). The interval 124 to 143 (SADQQLSQQGSAAQSELQSS) is disordered.

The protein belongs to the ATPase B chain family. As to quaternary structure, F-type ATPases have 2 components, F(1) - the catalytic core - and F(0) - the membrane proton channel. F(1) has five subunits: alpha(3), beta(3), gamma(1), delta(1), epsilon(1). F(0) has three main subunits: a(1), b(2) and c(10-14). The alpha and beta chains form an alternating ring which encloses part of the gamma chain. F(1) is attached to F(0) by a central stalk formed by the gamma and epsilon chains, while a peripheral stalk is formed by the delta and b chains.

The protein resides in the cell membrane. Its function is as follows. F(1)F(0) ATP synthase produces ATP from ADP in the presence of a proton or sodium gradient. F-type ATPases consist of two structural domains, F(1) containing the extramembraneous catalytic core and F(0) containing the membrane proton channel, linked together by a central stalk and a peripheral stalk. During catalysis, ATP synthesis in the catalytic domain of F(1) is coupled via a rotary mechanism of the central stalk subunits to proton translocation. In terms of biological role, component of the F(0) channel, it forms part of the peripheral stalk, linking F(1) to F(0). The chain is ATP synthase subunit b from Mycolicibacterium vanbaalenii (strain DSM 7251 / JCM 13017 / BCRC 16820 / KCTC 9966 / NRRL B-24157 / PYR-1) (Mycobacterium vanbaalenii).